The following is a 494-amino-acid chain: Glycerol kinase (494 aa).

Residue threonine 12 coordinates ADP. Positions 12, 13, and 14 each coordinate ATP. Residue threonine 12 participates in sn-glycerol 3-phosphate binding. An ADP-binding site is contributed by arginine 16. Positions 82, 83, 134, and 243 each coordinate sn-glycerol 3-phosphate. Glycerol contacts are provided by arginine 82, glutamate 83, tyrosine 134, aspartate 243, and glutamine 244. ADP contacts are provided by threonine 265 and glycine 308. Residues threonine 265, glycine 308, glutamine 312, and glycine 408 each contribute to the ATP site. The ADP site is built by glycine 408 and asparagine 412.

This sequence belongs to the FGGY kinase family.

The catalysed reaction is glycerol + ATP = sn-glycerol 3-phosphate + ADP + H(+). It functions in the pathway polyol metabolism; glycerol degradation via glycerol kinase pathway; sn-glycerol 3-phosphate from glycerol: step 1/1. Its activity is regulated as follows. Inhibited by fructose 1,6-bisphosphate (FBP). Its function is as follows. Key enzyme in the regulation of glycerol uptake and metabolism. Catalyzes the phosphorylation of glycerol to yield sn-glycerol 3-phosphate. The polypeptide is Glycerol kinase (Marinomonas sp. (strain MWYL1)).